A 239-amino-acid chain; its full sequence is Ribonuclease P protein component 3 (239 aa).

This sequence belongs to the eukaryotic/archaeal RNase P protein component 3 family. As to quaternary structure, consists of a catalytic RNA component and at least 4-5 protein subunits.

Its subcellular location is the cytoplasm. It carries out the reaction Endonucleolytic cleavage of RNA, removing 5'-extranucleotides from tRNA precursor.. In terms of biological role, part of ribonuclease P, a protein complex that generates mature tRNA molecules by cleaving their 5'-ends. The sequence is that of Ribonuclease P protein component 3 from Methanosarcina acetivorans (strain ATCC 35395 / DSM 2834 / JCM 12185 / C2A).